A 181-amino-acid chain; its full sequence is ADP-ribosylation factor 2-A (181 aa).

A lipid anchor (N-myristoyl glycine) is attached at Gly2. Residues 24-31 (GLDAAGKT), 67-71 (DVGGQ), and 126-129 (NKQD) each bind GTP.

The protein belongs to the small GTPase superfamily. Arf family.

It is found in the golgi apparatus. With respect to regulation, activated by AGD10. Functionally, GTP-binding protein involved in protein trafficking; may modulate vesicle budding and uncoating within the Golgi apparatus. This chain is ADP-ribosylation factor 2-A (ARF2-A), found in Arabidopsis thaliana (Mouse-ear cress).